Consider the following 161-residue polypeptide: Large ribosomal subunit protein uL15 (161 aa).

Basic and acidic residues predominate over residues methionine 1–proline 10. A disordered region spans residues methionine 1–glutamate 42. Positions arginine 21–valine 35 are enriched in gly residues.

Belongs to the universal ribosomal protein uL15 family. Part of the 50S ribosomal subunit.

Functionally, binds to the 23S rRNA. This is Large ribosomal subunit protein uL15 from Acidiphilium cryptum (strain JF-5).